Here is a 290-residue protein sequence, read N- to C-terminus: Acetyl-coenzyme A carboxylase carboxyl transferase subunit beta (290 aa).

Positions 28–290 (LMNKCSKCGT…TVREGLSHGG (263 aa)) constitute a CoA carboxyltransferase N-terminal domain. Residues Cys-32, Cys-35, Cys-51, and Cys-54 each contribute to the Zn(2+) site. Residues 32–54 (CSKCGTIQYSKELDKNLKVCSSC) form a C4-type zinc finger.

This sequence belongs to the AccD/PCCB family. As to quaternary structure, acetyl-CoA carboxylase is a heterohexamer composed of biotin carboxyl carrier protein (AccB), biotin carboxylase (AccC) and two subunits each of ACCase subunit alpha (AccA) and ACCase subunit beta (AccD). Requires Zn(2+) as cofactor.

It is found in the cytoplasm. The enzyme catalyses N(6)-carboxybiotinyl-L-lysyl-[protein] + acetyl-CoA = N(6)-biotinyl-L-lysyl-[protein] + malonyl-CoA. It functions in the pathway lipid metabolism; malonyl-CoA biosynthesis; malonyl-CoA from acetyl-CoA: step 1/1. Component of the acetyl coenzyme A carboxylase (ACC) complex. Biotin carboxylase (BC) catalyzes the carboxylation of biotin on its carrier protein (BCCP) and then the CO(2) group is transferred by the transcarboxylase to acetyl-CoA to form malonyl-CoA. The sequence is that of Acetyl-coenzyme A carboxylase carboxyl transferase subunit beta from Paenibacillus sp. (strain JDR-2).